A 346-amino-acid chain; its full sequence is Dihydroorotate dehydrogenase (quinone) (346 aa).

Residues 62–66 (AGMDK) and Thr-86 each bind FMN. A substrate-binding site is contributed by Lys-66. 111-115 (NRMGF) lines the substrate pocket. Residues Asn-142 and Asn-175 each contribute to the FMN site. Position 175 (Asn-175) interacts with substrate. Ser-178 (nucleophile) is an active-site residue. Substrate is bound at residue Asn-180. The FMN site is built by Lys-211 and Val-239. Residue 240 to 241 (NT) participates in substrate binding. FMN is bound by residues Gly-261, Gly-289, and 310-311 (YT).

The protein belongs to the dihydroorotate dehydrogenase family. Type 2 subfamily. In terms of assembly, monomer. The cofactor is FMN.

The protein resides in the cell membrane. The enzyme catalyses (S)-dihydroorotate + a quinone = orotate + a quinol. It functions in the pathway pyrimidine metabolism; UMP biosynthesis via de novo pathway; orotate from (S)-dihydroorotate (quinone route): step 1/1. In terms of biological role, catalyzes the conversion of dihydroorotate to orotate with quinone as electron acceptor. The protein is Dihydroorotate dehydrogenase (quinone) of Thermus thermophilus (strain ATCC 27634 / DSM 579 / HB8).